The sequence spans 345 residues: 4-hydroxyproline 2-epimerase (345 aa).

Glutamine 85 is a binding site for substrate. The active-site Proton acceptor is the serine 93. Residues 94 to 95 and aspartate 251 each bind substrate; that span reads GS. Cysteine 255 acts as the Proton donor in catalysis. A substrate-binding site is contributed by 256–257; that stretch reads GT.

The protein belongs to the proline racemase family.

The catalysed reaction is trans-4-hydroxy-L-proline = cis-4-hydroxy-D-proline. In terms of biological role, catalyzes the epimerization of trans-4-hydroxy-L-proline (t4LHyp) to cis-4-hydroxy-D-proline (c4DHyp). May be involved in a degradation pathway of t4LHyp. Can also catalyze the epimerization of trans-3-hydroxy-L-proline (t3LHyp) to cis-3-hydroxy-D-proline (c3DHyp) in vitro, albeit with 2-fold lower efficiency. Displays no proline racemase activity. The protein is 4-hydroxyproline 2-epimerase of Rhizobium etli (strain ATCC 51251 / DSM 11541 / JCM 21823 / NBRC 15573 / CFN 42).